A 632-amino-acid polypeptide reads, in one-letter code: Biosynthetic arginine decarboxylase (632 aa).

Lysine 101 bears the N6-(pyridoxal phosphate)lysine mark. 281–291 (FDVGGGLGVDY) is a substrate binding site.

It belongs to the Orn/Lys/Arg decarboxylase class-II family. SpeA subfamily. Mg(2+) is required as a cofactor. Requires pyridoxal 5'-phosphate as cofactor.

It carries out the reaction L-arginine + H(+) = agmatine + CO2. Its pathway is amine and polyamine biosynthesis; agmatine biosynthesis; agmatine from L-arginine: step 1/1. In terms of biological role, catalyzes the biosynthesis of agmatine from arginine. In Escherichia coli O157:H7 (strain EC4115 / EHEC), this protein is Biosynthetic arginine decarboxylase.